A 501-amino-acid chain; its full sequence is Beta-secretase 1 (501 aa).

The first 21 residues, 1-21 (MAPALRWLLLWVGSGMLPAQG), serve as a signal peptide directing secretion. Positions 22-45 (THLGIRLPLRSGLAGPPLGLRLPR) are excised as a propeptide. Over 22-457 (THLGIRLPLR…PQTDESTLMT (436 aa)) the chain is Extracellular. The 342-residue stretch at 75 to 416 (YYVEMTVGSP…DRARKRIGFA (342 aa)) folds into the Peptidase A1 domain. Aspartate 93 is a catalytic residue. Lysine 126 carries the post-translational modification N6-acetyllysine. 3 N-linked (GlcNAc...) asparagine glycosylation sites follow: asparagine 153, asparagine 172, and asparagine 223. Cystine bridges form between cysteine 216–cysteine 420, cysteine 278–cysteine 443, and cysteine 330–cysteine 380. Residues lysine 275, lysine 279, and lysine 285 each carry the N6-acetyllysine modification. The active site involves aspartate 289. N6-acetyllysine occurs at positions 299, 300, and 307. N-linked (GlcNAc...) asparagine glycosylation occurs at asparagine 354. Residues 458 to 478 (IAYVMAAICALFMLPLCLMVC) traverse the membrane as a helical segment. Residues cysteine 474, cysteine 478, cysteine 482, and cysteine 485 are each lipidated (S-palmitoyl cysteine). At 479 to 501 (QWRCLRCLRHQHDDFADDISLLK) the chain is on the cytoplasmic side. The interval 479–501 (QWRCLRCLRHQHDDFADDISLLK) is interaction with RTN3. The short motif at 496–500 (DISLL) is the DXXLL element. The residue at position 498 (serine 498) is a Phosphoserine. Lysine 501 is covalently cross-linked (Glycyl lysine isopeptide (Lys-Gly) (interchain with G-Cter in ubiquitin)).

Belongs to the peptidase A1 family. As to quaternary structure, monomer. Interacts (via DXXLL motif) with GGA1, GGA2 and GGA3 (via their VHS domain); the interaction highly increases when BACE1 is phosphorylated at Ser-498. Interacts with RTN1; RTN2; RTN3 and RTN4; the interaction leads to inhibition of amyloid precursor protein processing. Interacts with SNX6. Interacts with PCSK9. Interacts with NAT8 and NAT8B. Interacts with BIN1. Interacts (via extracellular domain) with ADAM10 (via extracellular domain). Interacts with SORL1; this interaction may affect binding with APP and hence reduce APP cleavage. Interacts with NRDC AND NRG1. Post-translationally, palmitoylation mediates lipid raft localization. Acetylated in the endoplasmic reticulum at Lys-126, Lys-275, Lys-279, Lys-285, Lys-299, Lys-300 and Lys-307. Acetylation by NAT8 and NAT8B is transient and deacetylation probably occurs in the Golgi. Acetylation regulates the maturation, the transport to the plasma membrane, the stability and the expression of the protein. In terms of processing, ubiquitinated at Lys-501, ubiquitination leads to lysosomal degradation. Monoubiquitinated and 'Lys-63'-linked polyubitinated. Deubiquitnated by USP8; inhibits lysosomal degradation. Post-translationally, phosphorylation at Ser-498 is required for interaction with GGA1 and retrograded transport from endosomal compartments to the trans-Golgi network. Non-phosphorylated BACE1 enters a direct recycling route to the cell surface. N-Glycosylated. Addition of a bisecting N-acetylglucosamine by MGAT3 blocks lysosomal targeting, further degradation and is required for maintaining stability under stress conditions.

The protein resides in the cell membrane. It is found in the golgi apparatus. Its subcellular location is the trans-Golgi network. The protein localises to the endoplasmic reticulum. It localises to the endosome. The protein resides in the cell surface. It is found in the cytoplasmic vesicle membrane. Its subcellular location is the membrane raft. The protein localises to the lysosome. It localises to the late endosome. The protein resides in the early endosome. It is found in the recycling endosome. Its subcellular location is the cell projection. The protein localises to the axon. It localises to the dendrite. It catalyses the reaction Broad endopeptidase specificity. Cleaves Glu-Val-Asn-Leu-|-Asp-Ala-Glu-Phe in the Swedish variant of Alzheimer's amyloid precursor protein.. Inhibited by RTN3 and RTN4. Responsible for the proteolytic processing of the amyloid precursor protein (APP). Cleaves at the N-terminus of the A-beta peptide sequence, between residues 671 and 672 of APP, leads to the generation and extracellular release of beta-cleaved soluble APP, and a corresponding cell-associated C-terminal fragment which is later released by gamma-secretase. Cleaves CHL1. This Rattus norvegicus (Rat) protein is Beta-secretase 1 (Bace1).